The chain runs to 522 residues: Target of rapamycin complex 2 subunit MAPKAP1 (522 aa).

N-acetylalanine is present on alanine 2. The interval 2–184 (AFLDNPTIIL…KKIDVYLPLH (183 aa)) is interaction with MAP3K2. An interaction with NBN region spans residues 2-267 (AFLDNPTIIL…GFSTLALVEK (266 aa)). The tract at residues 38 to 59 (LEKTHPPSVPGDSGSEVQGSSG) is disordered. A Phosphothreonine modification is found at threonine 86. Phosphoserine is present on residues serine 128, serine 186, serine 315, and serine 356. The region spanning 139–267 (QSILSVRLEQ…GFSTLALVEK (129 aa)) is the CRIM domain. Positions 279 to 353 (LFVRINAAHG…QNAWEFCLVR (75 aa)) are SIN1-type RBD. Positions 382–487 (HYKSFKVSMI…IVLKVNYILE (106 aa)) constitute an SIN1-type PH domain. Arginine 393 contributes to the a 1,2-diacyl-sn-glycero-3-phospho-(1D-myo-inositol-3,4,5-trisphosphate) binding site. Phosphothreonine is present on threonine 398. A 1,2-diacyl-sn-glycero-3-phospho-(1D-myo-inositol-3,4,5-trisphosphate)-binding residues include lysine 428 and lysine 464. The interaction with ATF2 stretch occupies residues 468–522 (FESDAATVSEIVLKVNYILESRASTARADYFAQKQRKLNRRTSFSFQKEKKSGQQ). Phosphoserine is present on serine 510.

The protein belongs to the SIN1 family. In terms of assembly, component of the mechanistic target of rapamycin complex 2 (mTORC2), consisting in two heterotretramers composed of MTOR, MLST8, RICTOR and MAPKAP1/SIN1. The mTORC2 core complex associates with PRR5/PROTOR1 and/or PRR5L/PROTOR2. Contrary to mTORC1, mTORC2 does not bind to and is not sensitive to FKBP12-rapamycin. Interacts with MAP3K2. Interacts with ATF2. Interacts with MAPK8. Interacts with GTP-bound HRAS and KRAS; inhibiting their activity. Interacts with IFNAR2. Phosphorylation at Ser-128 by PKC promotes relocalization to the perinuclear region, where the mTORC2 complex specifically mediates phosphorylation of SGK1. Phosphorylated at Thr-86 by AKT1 or RPS6KB1 in the presence of growth factors; the effect of this phosphorylation is however unclear. According to two studies, phosphorylation at Thr-86 by AKT1 is part of a positive feedback loop that increases mTORC2 activation. According to another study, phosphorylation at Thr-86 and Thr-398 by RPS6KB1 promotes dissociation from the mTORC2 complex, leading to inhibit mTORC2 signaling.

The protein localises to the cell membrane. It is found in the endoplasmic reticulum membrane. The protein resides in the early endosome membrane. It localises to the late endosome membrane. Its subcellular location is the lysosome membrane. The protein localises to the golgi apparatus membrane. It is found in the mitochondrion outer membrane. The protein resides in the cytoplasm. It localises to the perinuclear region. Its subcellular location is the nucleus. With respect to regulation, phosphatidylinositol 3,4,5-trisphosphate (PI(3,4,5)P3) promotes MTOR activation by relieving MAPKAP1/SIN1-mediated inhibition of MTOR that takes place in absence of PI(3,4,5)P3. In terms of biological role, component of the mechanistic target of rapamycin complex 2 (mTORC2), which transduces signals from growth factors to pathways involved in proliferation, cytoskeletal organization, lipogenesis and anabolic output. In response to growth factors, mTORC2 phosphorylates and activates AGC protein kinase family members, including AKT (AKT1, AKT2 and AKT3), PKC (PRKCA, PRKCB and PRKCE) and SGK1. In contrast to mTORC1, mTORC2 is nutrient-insensitive. Within the mTORC2 complex, MAPKAP1/SIN1 acts as a substrate adapter which recognizes and binds AGC protein kinase family members for phosphorylation by MTOR. mTORC2 plays a critical role in AKT1 activation by mediating phosphorylation of different sites depending on the context, such as 'Thr-450', 'Ser-473', 'Ser-477' or 'Thr-479', facilitating the phosphorylation of the activation loop of AKT1 on 'Thr-308' by PDPK1/PDK1 which is a prerequisite for full activation. mTORC2 catalyzes the phosphorylation of SGK1 at 'Ser-422' and of PRKCA on 'Ser-657'. The mTORC2 complex also phosphorylates various proteins involved in insulin signaling, such as FBXW8 and IGF2BP1. mTORC2 acts upstream of Rho GTPases to regulate the actin cytoskeleton, probably by activating one or more Rho-type guanine nucleotide exchange factors. mTORC2 promotes the serum-induced formation of stress-fibers or F-actin. MAPKAP1 inhibits MAP3K2 by preventing its dimerization and autophosphorylation. Inhibits HRAS and KRAS independently of mTORC2 complex. Enhances osmotic stress-induced phosphorylation of ATF2 and ATF2-mediated transcription. Involved in ciliogenesis, regulates cilia length through its interaction with CCDC28B independently of mTORC2 complex. The polypeptide is Target of rapamycin complex 2 subunit MAPKAP1 (Rattus norvegicus (Rat)).